Here is a 344-residue protein sequence, read N- to C-terminus: Alkyl hydroperoxide reductase Rv2159c (344 aa).

The tract at residues 49–50 (AG) is important for interaction with PknI. Cysteine 84 acts as the Cysteine sulfenic acid (-SOH) intermediate in catalysis.

Belongs to the AhpD family. As to quaternary structure, interacts with the serine/threonine-protein kinase PknI. The PknI-Rv2159c interaction is mediated through phosphorylation independent physical interaction.

With respect to regulation, interaction with PknI increases the peroxidase activity by several folds. Its function is as follows. Involved in protection against oxidative stresses. May play a significant role in maintaining the cellular homeostasis during stress and virulence of M.tuberculosis. In vitro, catalyzes the decomposition of cumene hydroperoxide (CHP) to acetophenone. The polypeptide is Alkyl hydroperoxide reductase Rv2159c (Mycobacterium tuberculosis (strain ATCC 25618 / H37Rv)).